We begin with the raw amino-acid sequence, 225 residues long: Uracil-DNA glycosylase 1 (225 aa).

D68 (proton acceptor) is an active-site residue.

This sequence belongs to the uracil-DNA glycosylase (UDG) superfamily. UNG family.

The protein localises to the cytoplasm. It carries out the reaction Hydrolyzes single-stranded DNA or mismatched double-stranded DNA and polynucleotides, releasing free uracil.. Functionally, excises uracil residues from the DNA which can arise as a result of misincorporation of dUMP residues by DNA polymerase or due to deamination of cytosine. In Streptomyces avermitilis (strain ATCC 31267 / DSM 46492 / JCM 5070 / NBRC 14893 / NCIMB 12804 / NRRL 8165 / MA-4680), this protein is Uracil-DNA glycosylase 1 (ung1).